We begin with the raw amino-acid sequence, 127 residues long: DNA-directed RNA polymerase subunit omega (127 aa).

The protein belongs to the RNA polymerase subunit omega family. The RNAP catalytic core consists of 2 alpha, 1 beta, 1 beta' and 1 omega subunit. When a sigma factor is associated with the core the holoenzyme is formed, which can initiate transcription.

The catalysed reaction is RNA(n) + a ribonucleoside 5'-triphosphate = RNA(n+1) + diphosphate. In terms of biological role, promotes RNA polymerase assembly. Latches the N- and C-terminal regions of the beta' subunit thereby facilitating its interaction with the beta and alpha subunits. The polypeptide is DNA-directed RNA polymerase subunit omega (Rickettsia rickettsii (strain Iowa)).